The primary structure comprises 239 residues: Probable replication-associated protein repA2 (239 aa).

It belongs to the IncFII RepA family.

This protein is essential for plasmid replication; it is involved in copy control functions. The polypeptide is Probable replication-associated protein repA2 (repA2) (Buchnera aphidicola subsp. Baizongia pistaciae (strain Bp)).